The sequence spans 370 residues: MSTTTVITPGTITREKNENGAPLYPDYMPFYDPLEKVEDIGAFEHFDPGHRADPKLPNLLKNATKVWELSPHVGTEIHGVQLSQLDSAGLDELALLAAQRGALVFRDQDFVNIGFDAQKKLVSHFGPLHIHGWAPHPAAGSEEHMIIYDHKDDLRVRQSWAGRSPVQWHTDQSPEQQPPGTTFIAMLESPTTAGGDTLVSSSVRAYSSLSPRFRKRLEGLTAIHTNNDGVSQELKHGQQAVMRRGVLQAEHPVVLVHPVTKQKALYVNPVYTKKIVGFDQEESDCILKFLFDHIAKRQDFSCRIRYEAGTVLVWDQRVTNHSQTLDYPIGDRRHGFRLTPLANKPIPAKIEEDDEEFSTDDARHLVGNAS.

The segment covering 1–12 (MSTTTVITPGTI) has biased composition (low complexity). Residues 1–20 (MSTTTVITPGTITREKNENG) are disordered. A substrate-binding site is contributed by H131. Fe cation-binding residues include H169 and D171. T197 is a 2-oxoglutarate binding site. Residue H321 participates in Fe cation binding. Residues R333 and R337 each contribute to the 2-oxoglutarate site. R337 lines the substrate pocket.

This sequence belongs to the TfdA dioxygenase family. Fe(2+) is required as a cofactor.

It participates in alkaloid biosynthesis. In terms of biological role, alpha-ketoglutarate-dependent dioxygenase; part of the gene cluster that mediates the biosynthesis of communesins, a prominent class of indole alkaloids with great potential as pharmaceuticals. Communesins are biosynthesized by the coupling of tryptamine and aurantioclavine, two building blocks derived from L-tryptophan. The L-tryptophan decarboxylase cnsB converts L-tryptophan to tryptamine, whereas the tryptophan dimethylallyltransferase cnsF converts L-tryptophan to 4-dimethylallyl tryptophan which is further transformed to aurantioclavine by the aurantioclavine synthase cnsA, probably aided by the catalase cnsD. The cytochrome P450 monooxygenase cnsC catalyzes the heterodimeric coupling between the two different indole moieties, tryptamine and aurantioclavine, to construct vicinal quaternary stereocenters and yield the heptacyclic communesin scaffold. The O-methyltransferase cnsE then methylates the communesin scaffold to produce communesin K, the simplest characterized communesin that contains the heptacyclic core. The dioxygenase cnsJ converts communesin K into communesin I. Acylation to introduce the hexadienyl group at position N16 of communesin I by the acyltransferase cnsK leads to the production of communesin B. The hexadienyl group is produced by the highly reducing polyketide synthase cnsI, before being hydrolytically removed from cnsI by the serine hydrolase cnsH, converted into hexadienyl-CoA by the CoA ligase cnsG, and then transferred to communesin I by cnsK. Surprisingly, cnsK may also be a promiscuous acyltransferase that can tolerate a range of acyl groups, including acetyl-, propionyl-, and butyryl-CoA, which lead to communesins A, G and H respectively. The roles of the alpha-ketoglutarate-dependent dioxygenases cnsM and cnsP have still to be determined. The sequence is that of Alpha-ketoglutarate-dependent dioxygenase cnsP from Penicillium expansum (Blue mold rot fungus).